We begin with the raw amino-acid sequence, 159 residues long: GDP-mannose mannosyl hydrolase (159 aa).

Residues 2–3 (FL), Phe8, and Arg36 contribute to the substrate site. The Nudix hydrolase domain occupies 13 to 153 (RSTPLVSLDF…SRAYFLAEKR (141 aa)). Mg(2+) is bound by residues Gly49, Glu69, and Gln122. The short motif at 50 to 71 (GRVQKDETLEAAFERLTMAELG) is the Nudix box element.

Homodimer. Mg(2+) serves as cofactor.

It carries out the reaction GDP-alpha-D-mannose + H2O = D-mannose + GDP + H(+). Hydrolyzes both GDP-mannose and GDP-glucose. Could participate in the regulation of cell wall biosynthesis by influencing the concentration of GDP-mannose or GDP-glucose in the cell. Might also be involved in the biosynthesis of the slime polysaccharide colanic acid. This chain is GDP-mannose mannosyl hydrolase, found in Escherichia coli (strain K12).